Here is a 103-residue protein sequence, read N- to C-terminus: Large ribosomal subunit protein bL28 (103 aa).

The protein belongs to the bacterial ribosomal protein bL28 family.

This chain is Large ribosomal subunit protein bL28, found in Anaplasma marginale (strain St. Maries).